Consider the following 276-residue polypeptide: Sulfur carrier protein FdhD (276 aa).

The Cysteine persulfide intermediate role is filled by C118.

This sequence belongs to the FdhD family.

Its subcellular location is the cytoplasm. Required for formate dehydrogenase (FDH) activity. Acts as a sulfur carrier protein that transfers sulfur from IscS to the molybdenum cofactor prior to its insertion into FDH. In Mycobacterium bovis (strain ATCC BAA-935 / AF2122/97), this protein is Sulfur carrier protein FdhD.